Here is a 91-residue protein sequence, read N- to C-terminus: Elongation factor 1-beta (91 aa).

This sequence belongs to the EF-1-beta/EF-1-delta family.

Promotes the exchange of GDP for GTP in EF-1-alpha/GDP, thus allowing the regeneration of EF-1-alpha/GTP that could then be used to form the ternary complex EF-1-alpha/GTP/AAtRNA. In Thermofilum pendens (strain DSM 2475 / Hrk 5), this protein is Elongation factor 1-beta.